A 125-amino-acid chain; its full sequence is MADLAKIVEELSALTVLEAAELSKMLEEKWGVSAAAPVAVAAAAAGGAAAAPAEEQTEFTVVLADAGDKKINVIKEVRGITGLGLKEAKDLVEGAPKTVKEGASKDEAAKIKKALEDAGAKVEVK.

It belongs to the bacterial ribosomal protein bL12 family. As to quaternary structure, homodimer. Part of the ribosomal stalk of the 50S ribosomal subunit. Forms a multimeric L10(L12)X complex, where L10 forms an elongated spine to which 2 to 4 L12 dimers bind in a sequential fashion. Binds GTP-bound translation factors.

Its function is as follows. Forms part of the ribosomal stalk which helps the ribosome interact with GTP-bound translation factors. Is thus essential for accurate translation. The sequence is that of Large ribosomal subunit protein bL12 from Gluconobacter oxydans (strain 621H) (Gluconobacter suboxydans).